Here is a 264-residue protein sequence, read N- to C-terminus: Phosphatidylinositol transfer protein 1 (264 aa).

Residues 151–174 (NYKETEDPTKIRSEKANRGPLEEE) are disordered. Residues 238–264 (VRAFELKTKEDLKKKLEEKDENKAAEK) adopt a coiled-coil conformation.

It belongs to the PtdIns transfer protein family. PI transfer class I subfamily. In terms of processing, phosphorylated in response to activation of rasG.

It is found in the cytoplasm. Its subcellular location is the golgi apparatus. Functionally, catalyzes the transfer of PtdIns and phosphatidylcholine between membranes. The sequence is that of Phosphatidylinositol transfer protein 1 (pitA) from Dictyostelium discoideum (Social amoeba).